The following is a 146-amino-acid chain: Mitochondrial pyruvate carrier 3 (146 aa).

Residues 1–20 (MSASAFNFAFRRFWNSETGP) constitute a mitochondrion transit peptide. A run of 3 helical transmembrane segments spans residues 23 to 39 (VHFW…FAGL), 55 to 71 (LSLL…SFVI), and 78 to 94 (LASV…YHLT).

Belongs to the mitochondrial pyruvate carrier (MPC) (TC 2.A.105) family. In terms of assembly, the functional 150 kDa pyruvate import complex is a heteromer of MPC1 and either MPC2 or MPC3.

The protein localises to the mitochondrion. It is found in the mitochondrion inner membrane. Functionally, mediates the uptake of pyruvate into mitochondria. The chain is Mitochondrial pyruvate carrier 3 from Saccharomyces cerevisiae (strain ATCC 204508 / S288c) (Baker's yeast).